A 476-amino-acid polypeptide reads, in one-letter code: ATP synthase subunit beta (476 aa).

ATP is bound at residue 154–161 (GGAGVGKT).

It belongs to the ATPase alpha/beta chains family. F-type ATPases have 2 components, CF(1) - the catalytic core - and CF(0) - the membrane proton channel. CF(1) has five subunits: alpha(3), beta(3), gamma(1), delta(1), epsilon(1). CF(0) has four main subunits: a(1), b(1), b'(1) and c(9-12).

It is found in the cell inner membrane. It carries out the reaction ATP + H2O + 4 H(+)(in) = ADP + phosphate + 5 H(+)(out). Produces ATP from ADP in the presence of a proton gradient across the membrane. The catalytic sites are hosted primarily by the beta subunits. The polypeptide is ATP synthase subunit beta (Rhodopseudomonas palustris (strain BisA53)).